Reading from the N-terminus, the 175-residue chain is MTSQIRQNYSPEVEAAVNHLVNLHLRASYTYLSLGFYFDRDDVALEGVSHFFRELAEEKREAAERLLKMQNQRGGRALFQDVQKPSQDEWGKTLNAMEAALALEKNLNQALLDLHALGSAHTDPHLCDFLENHFLDEEVKLLKKMGDHLTNIRRLSGPQASLGEYLFERLTLKHD.

In terms of domain architecture, Ferritin-like diiron spans 7–156 (QNYSPEVEAA…DHLTNIRRLS (150 aa)). Fe cation is bound by residues glutamate 54, glutamate 57, glutamate 58, glutamate 61, and glutamate 64.

The protein belongs to the ferritin family. Oligomer of 24 subunits. There are two types of subunits: L (light) chain and H (heavy) chain. The major chain can be light or heavy, depending on the species and tissue type. The functional molecule forms a roughly spherical shell with a diameter of 12 nm and contains a central cavity into which the insoluble mineral iron core is deposited. Interacts with NCOA4.

It localises to the cytoplasmic vesicle. The protein resides in the autophagosome. The protein localises to the cytoplasm. It is found in the autolysosome. In terms of biological role, stores iron in a soluble, non-toxic, readily available form. Important for iron homeostasis. Iron is taken up in the ferrous form and deposited as ferric hydroxides after oxidation. Also plays a role in delivery of iron to cells. Mediates iron uptake in capsule cells of the developing kidney. Delivery to lysosomes by the cargo receptor NCOA4 for autophagic degradation and release or iron. This chain is Ferritin light chain (FTL), found in Oryctolagus cuniculus (Rabbit).